The following is a 1215-amino-acid chain: RNA-dependent RNA polymerase 1 (1215 aa).

The protein belongs to the RdRP family. In terms of assembly, cid12, hrr1 and rdp1 interact forming the RNA-directed RNA polymerase complex (RDRC). The RDRC complex interacts with the RITS complex via interaction between ago1 and hrr1. Clr4 has a role in mediating this interaction.

The protein localises to the cytoplasm. It localises to the nucleus. It is found in the chromosome. Its subcellular location is the telomere. The protein resides in the centromere. The catalysed reaction is RNA(n) + a ribonucleoside 5'-triphosphate = RNA(n+1) + diphosphate. Functionally, has a role in the RNA interference (RNAi) pathway which is important for heterochromatin formation, accurate chromosome segregation, centromere cohesion and telomere function during mitosis and meiosis. Required for both post-transcriptional and transcriptional gene silencing. Required for silencing at the centromeres and for initiation of transcriptionally silent heterochromatin at the mating type locus. Promotes histone H3 'Lys-10' methylation necessary for centromere function. Required for recruitment of swi6 and cohesin to an ectopic dg repeat. A member of the RNA-directed RNA polymerase complex (RDRC) which is involved in the generation of small interfering RNAs (siRNAs) and mediates their association with the RNA-induced transcriptional silencing (RITS) complex. RITS acts as a priming complex for dsRNA synthesis at the site of non-coding centromeric RNA. Its RNA-dependent RNA polymerase activity is critical in siRNA production necessary for heterochromatin formation. The protein is RNA-dependent RNA polymerase 1 (rdp1) of Schizosaccharomyces pombe (strain 972 / ATCC 24843) (Fission yeast).